A 197-amino-acid polypeptide reads, in one-letter code: Imidazoleglycerol-phosphate dehydratase (197 aa).

This sequence belongs to the imidazoleglycerol-phosphate dehydratase family.

It localises to the cytoplasm. The enzyme catalyses D-erythro-1-(imidazol-4-yl)glycerol 3-phosphate = 3-(imidazol-4-yl)-2-oxopropyl phosphate + H2O. Its pathway is amino-acid biosynthesis; L-histidine biosynthesis; L-histidine from 5-phospho-alpha-D-ribose 1-diphosphate: step 6/9. This is Imidazoleglycerol-phosphate dehydratase from Thioalkalivibrio sulfidiphilus (strain HL-EbGR7).